Here is a 327-residue protein sequence, read N- to C-terminus: Sugar transporter ERD6-like 9 (327 aa).

8 consecutive transmembrane segments (helical) span residues 26-46 (FLVFTTFIIVSASFSFGVALG), 68-88 (VFGSLLTFGGMIGALFSATIA), 102-122 (VFCISGWLAIALAKNIIWLDL), 125-145 (FFVGIGVGLLSYVVPVYIAEI), 152-172 (GTFTFSNQLLQNCGVATAYYL), 180-200 (IIALIGILPCLIQLVGLFFVP), 260-280 (LTIGIGLMLLQQLSGSAGLGY), and 295-315 (IGMTVLSIVVVPKAILGLILV).

It belongs to the major facilitator superfamily. Sugar transporter (TC 2.A.1.1) family.

The protein localises to the membrane. Sugar transporter. The sequence is that of Sugar transporter ERD6-like 9 from Arabidopsis thaliana (Mouse-ear cress).